Here is a 598-residue protein sequence, read N- to C-terminus: MSVDKEFLASLPTLPGVYRMVDAAGAVLYVGKAKDLRKRVGSYFLKTDQSPRIRLMLKSVDHIDTTVTRTEAEALLLENNLIKGLKPRFNILFRDDKSYPYLLLTGHGYPRLAYFRGAPKKRDQAFGPYPNSYAVRESIQLLQKVFQLRTCEDTVFGNRSRPCLLHQIKRCSAPCVSLVSAETYARDVAEAMLLLKGEATALTEEITAQMNAAAENLDFETAAYLRDRLRMLATVREKQFVDTTGSEADADVVAVAEVGGVIAVNLTMIRGGRHLGDRSFFPQHGEGAALGEALEAFVAQHYLDHPIPARILVSEAIDSAALQTLLSEQAGKKVTLQHRVTGERRVWIAMAQANARLSAERRSADRANQSQRLAALRDTLELPTLNRIECFDISHTMGEATIASCVVYEGDDLKKSDYRRYNIEGITPGDDYAAMHAALIKRFHRTVEENGVLPDLLLIDGGKGQVAMAVEALAELGIDDVLLLGVAKGESRKPGLETLIFADGRELKLARDHPGFHLIQQVRDEAHRFAITGHRAKRGKARVQSTLEDIAGIGPKRRKQLLEHFGGLQGVRNAGVDALASVNGISRELAEIIYNALH.

One can recognise a GIY-YIG domain in the interval 13–91; sequence TLPGVYRMVD…IKGLKPRFNI (79 aa). The 36-residue stretch at 200–235 folds into the UVR domain; the sequence is TALTEEITAQMNAAAENLDFETAAYLRDRLRMLATV.

The protein belongs to the UvrC family. As to quaternary structure, interacts with UvrB in an incision complex.

Its subcellular location is the cytoplasm. In terms of biological role, the UvrABC repair system catalyzes the recognition and processing of DNA lesions. UvrC both incises the 5' and 3' sides of the lesion. The N-terminal half is responsible for the 3' incision and the C-terminal half is responsible for the 5' incision. This is UvrABC system protein C from Thiobacillus denitrificans (strain ATCC 25259 / T1).